The following is a 213-amino-acid chain: Triosephosphate isomerase (213 aa).

Position 7–9 (7–9 (NLK)) interacts with substrate. Histidine 88 (electrophile) is an active-site residue. Glutamate 136 acts as the Proton acceptor in catalysis. 2 residues coordinate substrate: isoleucine 141 and glycine 174.

It belongs to the triosephosphate isomerase family. Homotetramer; dimer of dimers.

The protein resides in the cytoplasm. It carries out the reaction D-glyceraldehyde 3-phosphate = dihydroxyacetone phosphate. It functions in the pathway carbohydrate biosynthesis; gluconeogenesis. Its pathway is carbohydrate degradation; glycolysis; D-glyceraldehyde 3-phosphate from glycerone phosphate: step 1/1. Its function is as follows. Involved in the gluconeogenesis. Catalyzes stereospecifically the conversion of dihydroxyacetone phosphate (DHAP) to D-glyceraldehyde-3-phosphate (G3P). In Thermoplasma volcanium (strain ATCC 51530 / DSM 4299 / JCM 9571 / NBRC 15438 / GSS1), this protein is Triosephosphate isomerase.